The following is a 902-amino-acid chain: Respiratory burst oxidase homolog protein A (902 aa).

Over 1 to 344 (MMNRSEMQKL…KYFLFDNWKR (344 aa)) the chain is Cytoplasmic. 2 disordered regions span residues 63–87 (KSPN…RSGR) and 107–130 (ASSV…RRSK). The span at 74 to 87 (YEDQSLLRQGRSGR) shows a compositional bias: polar residues. Over residues 107 to 116 (ASSVSSSSAR) the composition is skewed to low complexity. 2 EF-hand-like regions span residues 163-173 (TMTTNGLLHRS) and 198-209 (ENVSGDSININE). EF-hand domains lie at 221-256 (DFDS…SASA) and 265-300 (QADE…APMQ). Residues Asp234, Asp236, Asp238, Arg240, and Glu245 each coordinate Ca(2+). Ser311 and Ser315 each carry phosphoserine. The chain crosses the membrane as a helical span at residues 345 to 365 (VWVMALWIGAMAGLFTWKFME). Topologically, residues 366 to 380 (YRKRSAYEVMGVCVC) are extracellular. A helical transmembrane segment spans residues 381–401 (IAKGAAETLKLNMAMILLPVC). Residues 383–540 (KGAAETLKLN…LFVIVYSLLV (158 aa)) enclose the Ferric oxidoreductase domain. The Cytoplasmic segment spans residues 402–428 (RNTITWLRTKTKLSAIVPFDDSLNFHK). The chain crosses the membrane as a helical span at residues 429-449 (VIAIGISVGVGIHATSHLACD). The Extracellular segment spans residues 450 to 484 (FPRLIAADEDQYEPMEKYFGPQTKRYLDFVQSVEG). Residues 485–505 (VTGIGMVVLMTIAFTLATTWF) traverse the membrane as a helical segment. Residues 506–529 (RRNKLNLPGPLKKITGFNAFWYSH) lie on the Cytoplasmic side of the membrane. Residues 530–550 (HLFVIVYSLLVVHGFYVYLII) traverse the membrane as a helical segment. The Extracellular segment spans residues 551–709 (EPWYKKTTWM…PAQDYKKFEV (159 aa)). One can recognise an FAD-binding FR-type domain in the interval 575–703 (IRAFRSSVEA…DGPYGAPAQD (129 aa)). A helical membrane pass occupies residues 710–730 (VLLVGLGIGATPMISIVSDII). The Cytoplasmic portion of the chain corresponds to 731–902 (NNLKGVEEGS…TKFIFHKENF (172 aa)). A disordered region spans residues 738–760 (EGSNRRQSPIHNMVTPPVSPSRK).

This sequence belongs to the RBOH (TC 5.B.1.3) family. In terms of assembly, monomer and homodimer.

The protein localises to the membrane. In terms of biological role, calcium-dependent NADPH oxidase that generates superoxide. The chain is Respiratory burst oxidase homolog protein A (RBOHA) from Arabidopsis thaliana (Mouse-ear cress).